The following is a 305-amino-acid chain: Phosphoribosylaminoimidazole-succinocarboxamide synthase (305 aa).

The protein belongs to the SAICAR synthetase family.

The catalysed reaction is 5-amino-1-(5-phospho-D-ribosyl)imidazole-4-carboxylate + L-aspartate + ATP = (2S)-2-[5-amino-1-(5-phospho-beta-D-ribosyl)imidazole-4-carboxamido]succinate + ADP + phosphate + 2 H(+). It participates in purine metabolism; IMP biosynthesis via de novo pathway; 5-amino-1-(5-phospho-D-ribosyl)imidazole-4-carboxamide from 5-amino-1-(5-phospho-D-ribosyl)imidazole-4-carboxylate: step 1/2. The chain is Phosphoribosylaminoimidazole-succinocarboxamide synthase from Polaromonas naphthalenivorans (strain CJ2).